Consider the following 402-residue polypeptide: DTVTSPDITAIVAVIGAVVLGLTSLTIIILFGFVWHQRWKSRKPASTGQIVLVKEDKELAQLRGMAETVGLANACYAVSTLPSQAEIESLPAFPRDKLNLHKLLGSGAFGEVYEGTALDILADGSGESRVAVKTLKRGATDQEKSEFLKEAHLMSKFDHPHILKLLGVCLLNEPQYLILELMEGGDLLSYLRGARKQKFQSPLLTLTDLLDICLDICKGCVYLEKMRFIHRDLAARNCLVSEKQYGSCSRVVKIGDFGLARDIYKNDYYRKRGEGLLPVRWMAPESLIDGVFTNHSDVWAFGVLVWETLTLGQQPYPGLSNIEVLHHVRSGGRLESPNNCPDDIRDLMTRCWAQDPHNRPTFFYIQHKLQEIRHSPLCFSYFLGDKESVAPLRIQTAFFQPL.

The 280-residue stretch at 98 to 377 folds into the Protein kinase domain; sequence LNLHKLLGSG…KLQEIRHSPL (280 aa). ATP contacts are provided by residues 104-112 and Lys133; that span reads LGSGAFGEV. Asp232 serves as the catalytic Proton acceptor. Tyr268 bears the Phosphotyrosine; by autocatalysis mark.

It belongs to the protein kinase superfamily. Tyr protein kinase family. Insulin receptor subfamily.

It catalyses the reaction L-tyrosyl-[protein] + ATP = O-phospho-L-tyrosyl-[protein] + ADP + H(+). The chain is Tyrosine-protein kinase transforming protein ros (V-ROS) from Galliformes (UR2SV).